The sequence spans 433 residues: Sensor protein RstB (433 aa).

Residues 1–3 (MKK) are Cytoplasmic-facing. The chain crosses the membrane as a helical span at residues 4-24 (LFIQFYLLLFVCFLVMSLLVG). The Periplasmic segment spans residues 25 to 135 (LVYKFTAERA…PYLYYLHQMR (111 aa)). The helical transmembrane segment at 136-156 (LLDIALIAFIAISLAFPVFIW) threads the bilayer. The Cytoplasmic portion of the chain corresponds to 157–433 (MRPHWQDMLK…WHNIPQFTSA (277 aa)). One can recognise an HAMP domain in the interval 158–210 (RPHWQDMLKLEAAAQRFGDGHLNERIHFDEGSSFERLGVAFNQMADNINALIA). One can recognise a Histidine kinase domain in the interval 218 to 425 (GIAHELRTPL…RFSFSWPLWH (208 aa)). Position 276 is a phosphohistidine; by autocatalysis (histidine 276).

Autophosphorylated.

The protein resides in the cell inner membrane. The enzyme catalyses ATP + protein L-histidine = ADP + protein N-phospho-L-histidine.. Its function is as follows. Member of the two-component regulatory system RstB/RstA. RstB functions as a membrane-associated protein kinase that phosphorylates RstA. The sequence is that of Sensor protein RstB (rstB) from Escherichia coli (strain K12).